The following is a 493-amino-acid chain: Gamma-aminobutyric acid receptor subunit alpha-3 (493 aa).

The signal sequence occupies residues 1–28 (MITTQMWHFYVTRVGLLLLISILPGTTG). Positions 27-54 (TGQGESRRQEPGDFVKQDIGGLSPKHAP) are disordered. At 29 to 276 (QGESRRQEPG…THFHLKRKIG (248 aa)) the chain is on the extracellular side. Positions 31–42 (ESRRQEPGDFVK) are enriched in basic and acidic residues. Residue Asn-63 is glycosylated (N-linked (GlcNAc...) asparagine). Arg-119 lines the 4-aminobutanoate pocket. Asn-163 and Asn-176 each carry an N-linked (GlcNAc...) asparagine glycan. Thr-182 provides a ligand contact to 4-aminobutanoate. A disulfide bridge connects residues Cys-191 and Cys-205. N-linked (GlcNAc...) asparagine glycosylation is present at Asn-228. 3 consecutive transmembrane segments (helical) span residues 277–298 (YFVIQTYLPCIMTVILSQVSFW), 304–325 (VPARTVFGVTTVLTMTTLSISA), and 338–359 (MDWFIAVCYAFVFSALIEFATV). Topologically, residues 360–458 (NYFTKRSWAW…TYNSVSKVDK (99 aa)) are cytoplasmic. At Ser-427 the chain carries Phosphoserine. Phosphothreonine is present on Thr-428. Phosphoserine occurs at positions 434 and 443. Residues 459-480 (ISRIIFPVLFAIFNLVYWATYV) traverse the membrane as a helical segment.

It belongs to the ligand-gated ion channel (TC 1.A.9) family. Gamma-aminobutyric acid receptor (TC 1.A.9.5) subfamily. GABRA3 sub-subfamily. Heteropentamer, formed by a combination of alpha (GABRA1-6), beta (GABRB1-3), gamma (GABRG1-3), delta (GABRD), epsilon (GABRE), rho (GABRR1-3), pi (GABRP) and theta (GABRQ) chains, each subunit exhibiting distinct physiological and pharmacological properties. Binds UBQLN1. Interacts with GPHN. As to expression, expressed in most brain regions. Expressed in lungs, in alveolar epithelium.

It is found in the postsynaptic cell membrane. Its subcellular location is the cell membrane. The enzyme catalyses chloride(in) = chloride(out). Alpha subunit of the heteropentameric ligand-gated chloride channel gated by gamma-aminobutyric acid (GABA), a major inhibitory neurotransmitter in the brain. GABA-gated chloride channels, also named GABA(A) receptors (GABAAR), consist of five subunits arranged around a central pore and contain GABA active binding site(s) located at the alpha and beta subunit interface(s). When activated by GABA, GABAARs selectively allow the flow of chloride anions across the cell membrane down their electrochemical gradient. Chloride influx into the postsynaptic neuron following GABAAR opening decreases the neuron ability to generate a new action potential, thereby reducing nerve transmission. This chain is Gamma-aminobutyric acid receptor subunit alpha-3, found in Rattus norvegicus (Rat).